A 424-amino-acid polypeptide reads, in one-letter code: S-phase kinase-associated protein 2 (424 aa).

Residues 52–73 form a disordered region; the sequence is PHGLLSNLGHPQSPPRKRVKGK. A Phosphoserine modification is found at Ser-64. Positions 67-73 match the Nuclear localization signal motif; that stretch reads RKRVKGK. Residues Lys-68 and Lys-71 each carry the N6-acetyllysine; by p300/EP300 modification. Residue Ser-75 is modified to Phosphoserine. In terms of domain architecture, F-box spans 94–140; it reads GVSWDSLPDELLLGIFSCLCLPELLRVSGVCKRWYRLSLDESLWQSL. LRR repeat units follow at residues 151–176, 177–204, 210–234, 235–257, 258–284, 286–308, 309–330, 334–356, 359–378, and 380–401; these read VTVR…PLGE, SFSS…ILSE, NLSL…NLVR, LNLC…SCSR, LDEL…LPNT, TQLN…IIKR, CPNL…CFPE, LNYL…LLEL, IPTL…TLQL, and REAL…RPTM. Ser-179 bears the Phosphoserine mark.

As to quaternary structure, part of a SCF(SKP2) complex consisting of CUL1, RBX1, SKP1 and SKP2. Component of a SCF(SKP2)-like complex containing CUL1, SKP1, TRIM21 and SKP2. Interacts directly with CUL1 and SKP1. Interacts with ASB2 which is the substrate-recognition component of a probable ECS E3 ubiquitin-protein ligase complex; ASB2 is likely to bridge the formation of dimeric E3-ubiquitin-protein ligase complexes composed of an ECS complex and an SCF(SKP2) complex. Interacts with CKS1. Interacts with the cyclin-A-CDK2 complex. Interacts with ORC1, phosphorylated CDT1, phosphorylated RBL2, ELF4, phosphorylated RAG2, FOXO1, UBP43, MYC, TOB1, TAL1 and KMT2A/MLL1. Interacts with TRIM21. Interacts with cyclin-E. Interacts with CARM1. Post-translationally, phosphorylated on serine and threonine resudues in response to DNA damage, promoting 'Lys-63'-linked ubiquitination of NBN. In terms of processing, ubiquitinated by the APC/C complex, leading to its degradation by the proteasome. Deubiquitinated by USP13. Acetylation at Lys-68 and Lys-71 increases stability through impairment of APC/C-mediated proteolysis and promotes cytoplasmic retention. Deacetylated by SIRT3.

The protein resides in the cytoplasm. The protein localises to the nucleus. It functions in the pathway protein modification; protein ubiquitination. In terms of biological role, substrate recognition component of a SCF (SKP1-CUL1-F-box protein) E3 ubiquitin-protein ligase complex which mediates the ubiquitination and subsequent proteasomal degradation of target proteins involved in cell cycle progression, signal transduction and transcription. Specifically recognizes phosphorylated CDKN1B/p27kip and is involved in regulation of G1/S transition. Degradation of CDKN1B/p27kip also requires CKS1. Recognizes target proteins ORC1, CDT1, RBL2, KMT2A/MLL1, CDK9, RAG2, NBN, FOXO1, UBP43, YTHDF2, and probably MYC, TOB1 and TAL1. Degradation of TAL1 also requires STUB1. Recognizes CDKN1A in association with CCNE1 or CCNE2 and CDK2. Promotes ubiquitination and destruction of CDH1 in a CK1-dependent manner, thereby regulating cell migration. Following phosphorylation in response to DNA damage, mediates 'Lys-63'-linked ubiquitination of NBN, promoting ATM recruitment to DNA damage sites and DNA repair via homologous recombination. Functionally, through the ubiquitin-mediated proteasomal degradation of viral proteins may have an antiviral activity. The polypeptide is S-phase kinase-associated protein 2 (Skp2) (Mus musculus (Mouse)).